The following is a 410-amino-acid chain: Imidazolonepropionase (410 aa).

Residues His73 and His75 each contribute to the Fe(3+) site. Zn(2+) is bound by residues His73 and His75. 4-imidazolone-5-propanoate is bound by residues Arg82, Tyr145, and His178. Tyr145 is an N-formimidoyl-L-glutamate binding site. Fe(3+) is bound at residue His243. His243 serves as a coordination point for Zn(2+). Gln246 is a 4-imidazolone-5-propanoate binding site. Asp318 provides a ligand contact to Fe(3+). A Zn(2+)-binding site is contributed by Asp318. 2 residues coordinate N-formimidoyl-L-glutamate: Asn320 and Gly322. Ser323 serves as a coordination point for 4-imidazolone-5-propanoate.

The protein belongs to the metallo-dependent hydrolases superfamily. HutI family. It depends on Zn(2+) as a cofactor. Fe(3+) serves as cofactor.

It is found in the cytoplasm. The enzyme catalyses 4-imidazolone-5-propanoate + H2O = N-formimidoyl-L-glutamate. It participates in amino-acid degradation; L-histidine degradation into L-glutamate; N-formimidoyl-L-glutamate from L-histidine: step 3/3. Its function is as follows. Catalyzes the hydrolytic cleavage of the carbon-nitrogen bond in imidazolone-5-propanoate to yield N-formimidoyl-L-glutamate. It is the third step in the universal histidine degradation pathway. This is Imidazolonepropionase from Shewanella baltica (strain OS223).